A 316-amino-acid chain; its full sequence is DNA-directed RNA polymerase subunit alpha (316 aa).

The tract at residues 1 to 229 (MLEMEKPRID…EYLKLFTEID (229 aa)) is alpha N-terminal domain (alpha-NTD). The tract at residues 246 to 316 (KDKILEMSIE…LNLSFRKSED (71 aa)) is alpha C-terminal domain (alpha-CTD).

The protein belongs to the RNA polymerase alpha chain family. Homodimer. The RNAP catalytic core consists of 2 alpha, 1 beta, 1 beta' and 1 omega subunit. When a sigma factor is associated with the core the holoenzyme is formed, which can initiate transcription.

It catalyses the reaction RNA(n) + a ribonucleoside 5'-triphosphate = RNA(n+1) + diphosphate. Its function is as follows. DNA-dependent RNA polymerase catalyzes the transcription of DNA into RNA using the four ribonucleoside triphosphates as substrates. The polypeptide is DNA-directed RNA polymerase subunit alpha (Syntrophomonas wolfei subsp. wolfei (strain DSM 2245B / Goettingen)).